A 520-amino-acid polypeptide reads, in one-letter code: GMP synthase [glutamine-hydrolyzing] (520 aa).

In terms of domain architecture, Glutamine amidotransferase type-1 spans 12–205 (KIIVLDYGSQ…AIFICGARGD (194 aa)). The active-site Nucleophile is Cys89. Catalysis depends on residues His179 and Glu181. In terms of domain architecture, GMPS ATP-PPase spans 206–395 (WSMDNFIDMQ…LGMPENIVWR (190 aa)). 233–239 (SGGVDSS) is a binding site for ATP.

Homodimer.

It carries out the reaction XMP + L-glutamine + ATP + H2O = GMP + L-glutamate + AMP + diphosphate + 2 H(+). It participates in purine metabolism; GMP biosynthesis; GMP from XMP (L-Gln route): step 1/1. In terms of biological role, catalyzes the synthesis of GMP from XMP. The chain is GMP synthase [glutamine-hydrolyzing] from Streptococcus uberis (strain ATCC BAA-854 / 0140J).